Consider the following 995-residue polypeptide: DExH-box ATP-dependent RNA helicase DExH10 (995 aa).

A disordered region spans residues 1 to 42 (MSAQMEEPETLGKRKESESSKLRSDETPTPEPRTKRRSLKRA). At Ser2 the chain carries N-acetylserine. Residues 10-26 (TLGKRKESESSKLRSDE) show a composition bias toward basic and acidic residues. One can recognise a Helicase ATP-binding domain in the interval 90–246 (VACLERKESI…WICYLHKQPC (157 aa)). 103-110 (AHTSAGKT) provides a ligand contact to ATP. A DEIH box motif is present at residues 194–197 (DEIH). A disordered region spans residues 290 to 318 (DTFPKPKSNDGKKSANGKSGGRGAKGGGG). Gly residues predominate over residues 307-318 (KSGGRGAKGGGG). In terms of domain architecture, Helicase C-terminal spans 323 to 524 (DVYKIVKMIM…LSYYTILNLL (202 aa)).

The protein belongs to the DExH box helicase family. SKI2 subfamily. Expressed in inflorescences, leaves, stems, and roots.

The protein resides in the nucleus. The protein localises to the nucleoplasm. It catalyses the reaction ATP + H2O = ADP + phosphate + H(+). In terms of biological role, ATP-dependent RNA helicase that associates with the RNA exosome complex, with the cap binding complex (CBC) and with the NEXT-like complex. Involved in the degradation of a large number of non-coding nuclear exosome substrates such as snoRNA and miRNA precursors, incompletely spliced mRNAs, and spurious transcripts produced from pseudogenes and intergenic regions. Involved in the maintenance of homeotic B and C gene expression in the reproductive whorls. Regulates floral organ spacing and identity, probably through the regulation of protein synthesis or mRNA degradation. The chain is DExH-box ATP-dependent RNA helicase DExH10 from Arabidopsis thaliana (Mouse-ear cress).